A 215-amino-acid chain; its full sequence is Transmembrane emp24 domain-containing protein 11 (215 aa).

The N-terminal stretch at 1–17 is a signal peptide; it reads MQIQTILLCFSFSFSAA. Residues 18–167 lie on the Lumenal side of the membrane; it reads FYFHAGEREE…ILKEQDYQRD (150 aa). Residues 27-125 form the GOLD domain; that stretch reads EKCIIEDIPS…KLRIHLDIRV (99 aa). Residue Asn105 is glycosylated (N-linked (GlcNAc...) asparagine). Residues 136–171 adopt a coiled-coil conformation; that stretch reads QAKDKVNEVTFKLQHLIEQVEQILKEQDYQRDREEN. The chain crosses the membrane as a helical span at residues 168–185; it reads REENFRITSEDTNRNVLW. The Cytoplasmic portion of the chain corresponds to 186 to 215; the sequence is WAFAQILIFISVGIFQMKHLKDFFIAKKLV. The COPII vesicle coat-binding signature appears at 208–209; sequence FF. The COPI vesicle coat-binding motif lies at 208–215; sequence FFIAKKLV.

This sequence belongs to the EMP24/GP25L family.

The protein resides in the endoplasmic reticulum membrane. In terms of biological role, part of a complex whose function is to bind Ca(2+) to the ER membrane and thereby regulate the retention of ER resident proteins. This Mus musculus (Mouse) protein is Transmembrane emp24 domain-containing protein 11 (Tmed11).